Here is a 189-residue protein sequence, read N- to C-terminus: Large ribosomal subunit protein bL25 (189 aa).

The protein belongs to the bacterial ribosomal protein bL25 family. CTC subfamily. As to quaternary structure, part of the 50S ribosomal subunit; part of the 5S rRNA/L5/L18/L25 subcomplex. Contacts the 5S rRNA. Binds to the 5S rRNA independently of L5 and L18.

Its function is as follows. This is one of the proteins that binds to the 5S RNA in the ribosome where it forms part of the central protuberance. The chain is Large ribosomal subunit protein bL25 from Azobacteroides pseudotrichonymphae genomovar. CFP2.